A 283-amino-acid polypeptide reads, in one-letter code: MKQSFSRLFGLNDKNDDAELTANEEVQQLAIKDIVPNRFQPRTLFDEDRIAELAQTIRTHGVIQPIVVRVRDDKYEIIAGERRWRAVTSLQWETIPAIVKEFNDSQTASIALIENLQREGLTAIEEATAYAKLIEIHNLTQESLAQRLGKGQSTIANKLRLLHLPQAVQDAILNRDISERHARALIALKDAEAQEAVLKQIIEEQLNVKQTEERVKAYFKTAEEEAPKKKKPKRKSYPKDMRIAMNTIRQSVDMVMKSGLKVDTDEEDNEEFYQFTIRIPKKK.

Positions 142 to 161 (ESLAQRLGKGQSTIANKLRL) form a DNA-binding region, H-T-H motif.

The protein belongs to the ParB family.

It localises to the cytoplasm. It is found in the nucleoid. Effects nucleoid occlusion by binding relatively nonspecifically to DNA and preventing the assembly of the division machinery in the vicinity of the nucleoid, especially under conditions that disturb the cell cycle. It helps to coordinate cell division and chromosome segregation by preventing the formation of the Z ring through the nucleoid, which would cause chromosome breakage. In Shouchella clausii (strain KSM-K16) (Alkalihalobacillus clausii), this protein is Nucleoid occlusion protein.